Reading from the N-terminus, the 168-residue chain is Variant surface antigen D (168 aa).

Positions 1–29 (MKKSIFSKKLLVSFGSLVTLAAIPLIAIS) are cleaved as a signal peptide. The N-palmitoyl cysteine moiety is linked to residue C30. Residue C30 is the site of S-diacylglycerol cysteine attachment. Residues 33–168 (TNTDQSQQPG…STSTSNMNTR (136 aa)) form a disordered region. 2 stretches are compositionally biased toward low complexity: residues 35–44 (TDQSQQPGSG) and 52–71 (GTTTGTDSTTGGQTGSESGT). Gly residues predominate over residues 72-81 (TTGGQTGTTT). A run of 7 repeats spans residues 81–92 (TGGQSDSTSTSK), 93–104 (EQGSSDSTSTSK), 105–116 (EQGSSDSTSTSK), 117–128 (EQGSSDSTSTSK), 129–140 (EQGSSDSTSTSK), 141–152 (EQGSSDSTSTSK), and 153–164 (EQGSSDSTSTSN). A 7 X 12 AA tandem repeats region spans residues 81–164 (TGGQSDSTST…GSSDSTSTSN (84 aa)). The segment covering 82-168 (GGQSDSTSTS…STSTSNMNTR (87 aa)) has biased composition (low complexity).

It localises to the cell membrane. Functionally, responsible for the antigenic diversity for host adaptation. Expression in E.coli of a construct containing vlpD, vlpE, and vlpF yields antigenically distinguishable products corresponding to each gene. In Mesomycoplasma hyorhinis (Mycoplasma hyorhinis), this protein is Variant surface antigen D (vlpD).